Reading from the N-terminus, the 430-residue chain is UPF0597 protein CV_1824 (430 aa).

Belongs to the UPF0597 family.

The protein is UPF0597 protein CV_1824 of Chromobacterium violaceum (strain ATCC 12472 / DSM 30191 / JCM 1249 / CCUG 213 / NBRC 12614 / NCIMB 9131 / NCTC 9757 / MK).